An 850-amino-acid chain; its full sequence is MASSRAQWFNPIAFTPWPVTCITTIVYLALLIPILVINLVVPSAPETNPKGVNLTEAWRDLQHLTGGFHPYNSRRNDEVHEWLLSRINSIIRPTVEAGQPSSANDNLPEVFVFDDNRSNLTYSNGGVGKTSIVGVYFESTNIIVYIRGSEDGLENWWEHSNGKPKGKGGVLVNAHYDSVSTGYGATDDGIGVVSLLQLLRYFTTPGNNPRKGLVLLFNNGEEDYLNGAHPPEADTTQAQDDTRHTNIDSLWHMLSASIGTTEGLVSYTGMDFDGKSKDQNKVNSGTGTLGVWFDMFGTAFAVFRLHTLFAISVALLVIAPLVIFVTSVILSKTDRMYLFSMSKSLEGTGDQVSLRGLRGFSRTPIILVIATTIPICLAYLLEKVNPYIVHSSQFSVWSMMFSAWIFLAWFLACAADFFRPSALHRAYSYTWIFIATWIMLVINTVYANQKGIAAGPSTAEFPGAAGEDTDPTESTSLLRGQRTTFANYRSSRPGGAAETDEREDINKGGTFEHEQSWSWTLPRWTWVLQLLLLAPIVLILVGQLALFLTASMCQVGSDGVSTFVVYLACSVFTTLLCIPLFPLIHRFTYHIPTFLFLVFIGTLIYNLVAFPFSPANRLKTFFIQEVDLDNGSNTVSLTGIQPYLTDAINSIPSAAGQNITCDKTTPFGKLERCSWSGLSPNVLGQGRERDNEIDPDKWITYNITKTVGKNKARIEISGRNTRACKLKFDRAVANFQVSGSAVDHRMPPTSRQGVSEIRLWSRTWENTWVVDINWHESADKSDDDDDDHDDENHDAPQNILSGKAICMWSDGNQPGVIPALDEVRLYAPSWIAISKAADGLVEASHSFTIQ.

Residues M1–T20 lie on the Cytoplasmic side of the membrane. The chain crosses the membrane as a helical span at residues C21–V41. Residues P42 to V282 are Vacuolar-facing. N-linked (GlcNAc...) asparagine glycosylation is found at N53, N116, and N119. Residues H175 and D187 each contribute to the Zn(2+) site. The Proton acceptor role is filled by E221. E222 provides a ligand contact to Zn(2+). A helical transmembrane segment spans residues N283–F303. Over R304–L308 the chain is Cytoplasmic. Residues F309–I329 traverse the membrane as a helical segment. At L330 to T363 the chain is on the vacuolar side. The chain crosses the membrane as a helical span at residues P364–V384. At N385–Q393 the chain is on the cytoplasmic side. A helical membrane pass occupies residues F394–A414. Residues A415 to R425 are Vacuolar-facing. Residues A426–Y446 traverse the membrane as a helical segment. Over A447 to Q529 the chain is Cytoplasmic. A helical transmembrane segment spans residues L530–A550. At S551–F563 the chain is on the vacuolar side. Residues V564–I584 traverse the membrane as a helical segment. Over H585–H590 the chain is Cytoplasmic. Residues I591–P611 form a helical membrane-spanning segment. Residues F612 to Q850 are Vacuolar-facing. Residues N630, N658, and N702 are each glycosylated (N-linked (GlcNAc...) asparagine).

It belongs to the peptidase M28 family. Requires Zn(2+) as cofactor.

The protein resides in the vacuole membrane. In terms of biological role, may be involved in vacuolar sorting and osmoregulation. The chain is Vacuolar membrane protease from Ajellomyces capsulatus (strain NAm1 / WU24) (Darling's disease fungus).